Reading from the N-terminus, the 347-residue chain is MNVRDFDFHLPEKLIAQTPLKDRTASRLLVLDKHTGAVEDKKFPDLLQFIEAGDCLVLNDTRVLPARLFGVKEETGAQVEVLLLKQMEGDRWETLVKPAKRLKVGTIIRFGNGELTATCVQELEHGGRVLEFSYEGIFHEVLDQLGEMPLPPYIKEQLDDKDRYQTVFAKNRGSAAAPTAGLHFTEELLDQLKQKGVHLAFITLHVGLGTFRPVSVEEIEEHEMHAEFYQMSAGTARLLNEVKRQGGRIIAVGTTSARTLETIRQEHDEFVETSGWTSIFIYPGYEFKGIDGLITNFHLPKSTLVMLVSALAGRENLLNAYAHAVKQSYRFFSFGDAMFIYDKKTNS.

It belongs to the QueA family. As to quaternary structure, monomer.

It is found in the cytoplasm. It catalyses the reaction 7-aminomethyl-7-carbaguanosine(34) in tRNA + S-adenosyl-L-methionine = epoxyqueuosine(34) in tRNA + adenine + L-methionine + 2 H(+). Its pathway is tRNA modification; tRNA-queuosine biosynthesis. In terms of biological role, transfers and isomerizes the ribose moiety from AdoMet to the 7-aminomethyl group of 7-deazaguanine (preQ1-tRNA) to give epoxyqueuosine (oQ-tRNA). In Halalkalibacterium halodurans (strain ATCC BAA-125 / DSM 18197 / FERM 7344 / JCM 9153 / C-125) (Bacillus halodurans), this protein is S-adenosylmethionine:tRNA ribosyltransferase-isomerase.